Reading from the N-terminus, the 563-residue chain is MDVGELLSYQPNRGTKRPRDDEEEELKTRRKQTGPRERGRYREDEATAAEDADDDKKRLLQIIDRDGEEEEEEEEPLDESSVKKMILTFEKRSYKNQELRIKFPDNPEKFMESELDLNDIIQEMHVVATMPDLYHLLVELSAVQSLLGLLGHDNTDVSIAVVDLLQELTDIDTLHESEEGAEVLIDALVDGQVVALLVQNLERLDESVREEADGVHNTLAIVENMAEFRPEMCTEAAQQGLLQWLLKRLKAKMPFDANKLYCSEVLAILLQDNDENRELLGELDGIDVLLQQLSVFKRHNPSTAEEQEMMENLFDALCSCLMLSSNRERFLKGEGLQLMNLMLREKKISRSSALKVLDHAMIGPEGADNCHKFVDILGLRTIFPLFMKSPRKIKKVGTTEKEHEEHVCSILASLLRNLRGQQRTRLLNKFTENDSEKVDRLMELHFKYLGAMQVADKKIEGEKHDIVRRGEIIDNDMEDEFYLRRLDAGLFILQHICYIMAEICNANVPQIRQRVHQILNMRGSSIKIVRHIIKEYAENIGDGRSPEFRETEQKRILGLLENF.

An N-acetylmethionine modification is found at Met-1. The tract at residues 1-81 is disordered; that stretch reads MDVGELLSYQ…EEEEPLDESS (81 aa). Positions 16-33 match the Nuclear localization signal motif; that stretch reads KRPRDDEEEELKTRRKQT. The segment covering 34 to 45 has biased composition (basic and acidic residues); the sequence is GPRERGRYREDE. The span at 66–78 shows a compositional bias: acidic residues; that stretch reads DGEEEEEEEEPLD. HEAT repeat units follow at residues 79-129 and 134-176; these read ESSV…VVAT and YHLL…TLHE. Lys-91 bears the N6-acetyllysine mark. Residues 130 to 140 carry the Nuclear export signal (NES) motif; the sequence is MPDLYHLLVEL. 5 ARM repeats span residues 178–228, 229–273, 274–323, 325–363, and 364–417; these read EEGA…MAEF, RPEM…LQDN, DENR…CLML, SNRERFLKGEGLQLMNLMLREKKISRSSALKVLDHAMIG, and PEGA…LLRN. A Phosphoserine modification is found at Ser-389. The stretch at 476–540 forms a coiled coil; the sequence is DMEDEFYLRR…HIIKEYAENI (65 aa). A Phosphoserine modification is found at Ser-545.

In terms of assembly, component of the PRP19-CDC5L splicing complex composed of a core complex comprising a homotetramer of PRPF19, CDC5L, PLRG1 and BCAS2, and at least three less stably associated proteins CTNNBL1, CWC15 and HSPA8. Interacts directly with CWC15 and CDC5L in the complex. Interacts with AICDA; the interaction is important for the antibody diversification activity of AICDA. Interacts with PRPF31 (via its NLS). Interacts (via its N-terminal NLS) with KPNA1 and KPNA2.

The protein resides in the nucleus. In terms of biological role, component of the PRP19-CDC5L complex that forms an integral part of the spliceosome and is required for activating pre-mRNA splicing. Participates in AID/AICDA-mediated somatic hypermutation (SHM) and class-switch recombination (CSR), 2 processes resulting in the production of high-affinity, mutated isotype-switched antibodies. This is Beta-catenin-like protein 1 (Ctnnbl1) from Rattus norvegicus (Rat).